A 133-amino-acid polypeptide reads, in one-letter code: Small ribosomal subunit protein uS8c (133 aa).

Belongs to the universal ribosomal protein uS8 family. In terms of assembly, part of the 30S ribosomal subunit.

It is found in the plastid. Its subcellular location is the chloroplast. In terms of biological role, one of the primary rRNA binding proteins, it binds directly to 16S rRNA central domain where it helps coordinate assembly of the platform of the 30S subunit. This chain is Small ribosomal subunit protein uS8c (rps8), found in Mesostigma viride (Green alga).